Consider the following 126-residue polypeptide: S-adenosylmethionine decarboxylase proenzyme (126 aa).

The active-site Schiff-base intermediate with substrate; via pyruvic acid is Ser-63. At Ser-63 the chain carries Pyruvic acid (Ser); by autocatalysis. His-68 functions as the Proton acceptor; for processing activity in the catalytic mechanism. Residue Cys-83 is the Proton donor; for catalytic activity of the active site.

This sequence belongs to the prokaryotic AdoMetDC family. Type 1 subfamily. In terms of assembly, heterotetramer of two alpha and two beta chains arranged as a dimer of alpha/beta heterodimers. Requires pyruvate as cofactor. Is synthesized initially as an inactive proenzyme. Formation of the active enzyme involves a self-maturation process in which the active site pyruvoyl group is generated from an internal serine residue via an autocatalytic post-translational modification. Two non-identical subunits are generated from the proenzyme in this reaction, and the pyruvate is formed at the N-terminus of the alpha chain, which is derived from the carboxyl end of the proenzyme. The post-translation cleavage follows an unusual pathway, termed non-hydrolytic serinolysis, in which the side chain hydroxyl group of the serine supplies its oxygen atom to form the C-terminus of the beta chain, while the remainder of the serine residue undergoes an oxidative deamination to produce ammonia and the pyruvoyl group blocking the N-terminus of the alpha chain.

It catalyses the reaction S-adenosyl-L-methionine + H(+) = S-adenosyl 3-(methylsulfanyl)propylamine + CO2. Its pathway is amine and polyamine biosynthesis; S-adenosylmethioninamine biosynthesis; S-adenosylmethioninamine from S-adenosyl-L-methionine: step 1/1. Catalyzes the decarboxylation of S-adenosylmethionine to S-adenosylmethioninamine (dcAdoMet), the propylamine donor required for the synthesis of the polyamines spermine and spermidine from the diamine putrescine. This is S-adenosylmethionine decarboxylase proenzyme from Pelotomaculum thermopropionicum (strain DSM 13744 / JCM 10971 / SI).